Consider the following 424-residue polypeptide: Tyrosine--tRNA ligase (424 aa).

Tyr37 contributes to the L-tyrosine binding site. The short motif at 42–51 is the 'HIGH' region element; sequence PTADSLHLGH. At Lys144 the chain carries N6-acetyllysine. Tyr175 and Gln179 together coordinate L-tyrosine. A 'KMSKS' region motif is present at residues 235-239; the sequence is KFGKT. Residue Lys238 coordinates ATP. One can recognise an S4 RNA-binding domain in the interval 357 to 414; that stretch reads ADLMQALVDSELQPSRGQARKTIASNAITINGEKQSDPEYFFKEEDRLFGRFTLLRRG.

This sequence belongs to the class-I aminoacyl-tRNA synthetase family. TyrS type 1 subfamily. As to quaternary structure, homodimer.

The protein resides in the cytoplasm. It carries out the reaction tRNA(Tyr) + L-tyrosine + ATP = L-tyrosyl-tRNA(Tyr) + AMP + diphosphate + H(+). Functionally, catalyzes the attachment of tyrosine to tRNA(Tyr) in a two-step reaction: tyrosine is first activated by ATP to form Tyr-AMP and then transferred to the acceptor end of tRNA(Tyr). The polypeptide is Tyrosine--tRNA ligase (Shigella boydii serotype 4 (strain Sb227)).